Here is a 373-residue protein sequence, read N- to C-terminus: Chorismate synthase (373 aa).

NADP(+)-binding residues include arginine 48 and arginine 54. FMN-binding positions include arginine 125–serine 127, asparagine 248–alanine 249, glycine 288, lysine 303–serine 307, and arginine 329.

This sequence belongs to the chorismate synthase family. In terms of assembly, homotetramer. The cofactor is FMNH2.

The catalysed reaction is 5-O-(1-carboxyvinyl)-3-phosphoshikimate = chorismate + phosphate. It functions in the pathway metabolic intermediate biosynthesis; chorismate biosynthesis; chorismate from D-erythrose 4-phosphate and phosphoenolpyruvate: step 7/7. Its function is as follows. Catalyzes the anti-1,4-elimination of the C-3 phosphate and the C-6 proR hydrogen from 5-enolpyruvylshikimate-3-phosphate (EPSP) to yield chorismate, which is the branch point compound that serves as the starting substrate for the three terminal pathways of aromatic amino acid biosynthesis. This reaction introduces a second double bond into the aromatic ring system. The sequence is that of Chorismate synthase from Colwellia psychrerythraea (strain 34H / ATCC BAA-681) (Vibrio psychroerythus).